The following is a 326-amino-acid chain: Toluene-4-monooxygenase system, ferredoxin--NAD(+) reductase component (326 aa).

A 2Fe-2S ferredoxin-type domain is found at 1 to 92; the sequence is MFNIQSDDLL…DLKIKVINRA (92 aa). [2Fe-2S] cluster-binding residues include C36, C41, C44, and C76. A ferredoxin-reductase region spans residues 95 to 326; sequence RASHPPKRFS…FEAIHFDRFF (232 aa). One can recognise an FAD-binding FR-type domain in the interval 100–195; it reads PKRFSTRVVS…DGPYGLSVLK (96 aa). FAD contacts are provided by residues 146–149, 162–164, and 170–172; these read RAYS, IVK, and KVS.

Belongs to the bacterial ring-hydroxylating dioxygenase ferredoxin reductase family. Monomer. The alkene monooxygenase multicomponent enzyme system is composed of an electron transfer component and a monooxygenase component interacting with the effector protein TmoD. The electron transfer component is composed of a ferredoxin reductase (TmoF) and a ferredoxin (TmoC), and the monooxygenase component is formed by a heterohexamer (dimer of heterotrimers) of two alpha subunits (TmoA), two beta subunits (TmoE) and two gamma subunits (TmoB). FAD is required as a cofactor. Requires [2Fe-2S] cluster as cofactor.

It catalyses the reaction 2 reduced [2Fe-2S]-[ferredoxin] + NAD(+) + H(+) = 2 oxidized [2Fe-2S]-[ferredoxin] + NADH. It participates in xenobiotic degradation; toluene degradation. Its function is as follows. Reductase component of the toluene-4-monooxygenase multicomponent enzyme system which catalyzes the O2- and NADH-dependent hydroxylation of toluene to form p-cresol. Ferredoxin reductase catalyzes the transfer of electrons from NADH to ferredoxin (TmoC). The chain is Toluene-4-monooxygenase system, ferredoxin--NAD(+) reductase component from Ectopseudomonas mendocina (Pseudomonas mendocina).